Consider the following 420-residue polypeptide: Glucose-1-phosphate adenylyltransferase (420 aa).

Alpha-D-glucose 1-phosphate-binding positions include Tyr-107, Gly-172, 187–188 (EK), and Ser-205.

It belongs to the bacterial/plant glucose-1-phosphate adenylyltransferase family. Homotetramer.

It carries out the reaction alpha-D-glucose 1-phosphate + ATP + H(+) = ADP-alpha-D-glucose + diphosphate. It functions in the pathway glycan biosynthesis; glycogen biosynthesis. Its function is as follows. Involved in the biosynthesis of ADP-glucose, a building block required for the elongation reactions to produce glycogen. Catalyzes the reaction between ATP and alpha-D-glucose 1-phosphate (G1P) to produce pyrophosphate and ADP-Glc. In Rhizobium radiobacter (Agrobacterium tumefaciens), this protein is Glucose-1-phosphate adenylyltransferase.